A 430-amino-acid chain; its full sequence is Enolase (430 aa).

Position 168 (glutamine 168) interacts with (2R)-2-phosphoglycerate. Catalysis depends on glutamate 210, which acts as the Proton donor. 3 residues coordinate Mg(2+): aspartate 247, glutamate 288, and aspartate 315. (2R)-2-phosphoglycerate contacts are provided by lysine 340, arginine 369, serine 370, and lysine 391. Catalysis depends on lysine 340, which acts as the Proton acceptor.

This sequence belongs to the enolase family. The cofactor is Mg(2+).

The protein resides in the cytoplasm. Its subcellular location is the secreted. It localises to the cell surface. It carries out the reaction (2R)-2-phosphoglycerate = phosphoenolpyruvate + H2O. It participates in carbohydrate degradation; glycolysis; pyruvate from D-glyceraldehyde 3-phosphate: step 4/5. In terms of biological role, catalyzes the reversible conversion of 2-phosphoglycerate (2-PG) into phosphoenolpyruvate (PEP). It is essential for the degradation of carbohydrates via glycolysis. The protein is Enolase of Rippkaea orientalis (strain PCC 8801 / RF-1) (Cyanothece sp. (strain PCC 8801)).